A 256-amino-acid polypeptide reads, in one-letter code: Thiazole synthase (256 aa).

K96 serves as the catalytic Schiff-base intermediate with DXP. Residues G157, 183–184, and 205–206 each bind 1-deoxy-D-xylulose 5-phosphate; these read AG and NT.

It belongs to the ThiG family. In terms of assembly, homotetramer. Forms heterodimers with either ThiH or ThiS.

It is found in the cytoplasm. The catalysed reaction is [ThiS sulfur-carrier protein]-C-terminal-Gly-aminoethanethioate + 2-iminoacetate + 1-deoxy-D-xylulose 5-phosphate = [ThiS sulfur-carrier protein]-C-terminal Gly-Gly + 2-[(2R,5Z)-2-carboxy-4-methylthiazol-5(2H)-ylidene]ethyl phosphate + 2 H2O + H(+). The protein operates within cofactor biosynthesis; thiamine diphosphate biosynthesis. Its function is as follows. Catalyzes the rearrangement of 1-deoxy-D-xylulose 5-phosphate (DXP) to produce the thiazole phosphate moiety of thiamine. Sulfur is provided by the thiocarboxylate moiety of the carrier protein ThiS. In vitro, sulfur can be provided by H(2)S. This Clostridioides difficile (strain 630) (Peptoclostridium difficile) protein is Thiazole synthase.